The sequence spans 337 residues: Fructose-1,6-bisphosphatase class 1 (337 aa).

4 residues coordinate Mg(2+): Glu-94, Asp-116, Leu-118, and Asp-119. Substrate-binding positions include 119–122 (DGSS), Asn-210, and Lys-276. Glu-282 contributes to the Mg(2+) binding site.

Belongs to the FBPase class 1 family. In terms of assembly, homotetramer. The cofactor is Mg(2+).

It is found in the cytoplasm. It catalyses the reaction beta-D-fructose 1,6-bisphosphate + H2O = beta-D-fructose 6-phosphate + phosphate. It participates in carbohydrate biosynthesis; gluconeogenesis. The protein is Fructose-1,6-bisphosphatase class 1 of Burkholderia cenocepacia (strain HI2424).